The primary structure comprises 581 residues: ATP-dependent lipid A-core flippase (581 aa).

5 helical membrane passes run 27–47, 63–83, 154–174, 251–271, and 279–299; these read VFLA…FPAI, MVWL…VIVY, IALI…TLAI, MTPI…FLAL, and GASA…ISPV. An ABC transmembrane type-1 domain is found at 28-311; the sequence is FLAVIGMVGT…LATVNPTIQR (284 aa). Residues 343–579 form the ABC transporter domain; it reads ICFDNVSLRY…GSYYANLSRL (237 aa). 377-384 is an ATP binding site; sequence GASGGGKS.

Belongs to the ABC transporter superfamily. Lipid exporter (TC 3.A.1.106) family. As to quaternary structure, homodimer.

The protein resides in the cell inner membrane. It carries out the reaction ATP + H2O + lipid A-core oligosaccharideSide 1 = ADP + phosphate + lipid A-core oligosaccharideSide 2.. Functionally, involved in lipopolysaccharide (LPS) biosynthesis. Translocates lipid A-core from the inner to the outer leaflet of the inner membrane. Transmembrane domains (TMD) form a pore in the inner membrane and the ATP-binding domain (NBD) is responsible for energy generation. The sequence is that of ATP-dependent lipid A-core flippase from Albidiferax ferrireducens (strain ATCC BAA-621 / DSM 15236 / T118) (Rhodoferax ferrireducens).